Consider the following 424-residue polypeptide: Tyrosine--tRNA ligase 1 (424 aa).

Residue tyrosine 37 participates in L-tyrosine binding. The short motif at 42 to 51 (PTADSLHLGH) is the 'HIGH' region element. L-tyrosine is bound by residues tyrosine 175 and glutamine 179. Positions 235–239 (KFGKT) match the 'KMSKS' region motif. Lysine 238 contacts ATP. The region spanning 357 to 414 (ADLQQALVNAGLVPSRGQARTMISSNAVAINGEKQSEPEYLFTDSNRLFDRYTLLRRG) is the S4 RNA-binding domain.

Belongs to the class-I aminoacyl-tRNA synthetase family. TyrS type 1 subfamily. As to quaternary structure, homodimer.

It localises to the cytoplasm. The enzyme catalyses tRNA(Tyr) + L-tyrosine + ATP = L-tyrosyl-tRNA(Tyr) + AMP + diphosphate + H(+). Functionally, catalyzes the attachment of tyrosine to tRNA(Tyr) in a two-step reaction: tyrosine is first activated by ATP to form Tyr-AMP and then transferred to the acceptor end of tRNA(Tyr). The sequence is that of Tyrosine--tRNA ligase 1 from Photorhabdus laumondii subsp. laumondii (strain DSM 15139 / CIP 105565 / TT01) (Photorhabdus luminescens subsp. laumondii).